The primary structure comprises 311 residues: Pyrimidine-specific ribonucleoside hydrolase RihA (311 aa).

Residue His240 is part of the active site.

The protein belongs to the IUNH family. RihA subfamily.

Its function is as follows. Hydrolyzes with equal efficiency cytidine or uridine to ribose and cytosine or uracil, respectively. The polypeptide is Pyrimidine-specific ribonucleoside hydrolase RihA (Escherichia coli (strain ATCC 8739 / DSM 1576 / NBRC 3972 / NCIMB 8545 / WDCM 00012 / Crooks)).